Reading from the N-terminus, the 872-residue chain is Tetratricopeptide repeat protein 16 (872 aa).

A disordered region spans residues 1–20 (MTDSDEDALKVDQGPSQDIP). TPR repeat units follow at residues 61-94 (VREY…DPQL), 96-128 (DFYA…QQDN), 136-169 (TFVL…QPEK), 251-284 (AQQA…NPLD), 285-318 (PSFF…VTED), 331-364 (LLTY…EQQE), 365-398 (KGLY…SPQD), and 406-439 (GLLQ…NPQK). Disordered stretches follow at residues 557–640 (ATPE…ETET) and 653–872 (TAMT…YEVL). Acidic residues predominate over residues 577–590 (KEEEEKEEEEQKEE). The segment covering 591 to 604 (EEQKKEEKKEEKKP) has biased composition (basic and acidic residues). Composition is skewed to polar residues over residues 610–640 (KVAS…ETET), 653–675 (TAMT…NNRE), 689–709 (GQRQ…NFSK), and 721–754 (KTKA…SQGP). Residues 762 to 783 (KTTRSPRQRPRKVKAARGRSWR) show a composition bias toward basic residues. 2 stretches are compositionally biased toward polar residues: residues 799–827 (RSST…GQRT) and 839–861 (GMSS…SKTE).

In Macaca fascicularis (Crab-eating macaque), this protein is Tetratricopeptide repeat protein 16 (TTC16).